A 525-amino-acid chain; its full sequence is MNLCLIDPFKQSDVPETVEYYLVDPKNIKSNCASFNRRGTLLAVGCASPIGKILVWDFDTKKIVRTLYHHTGCVNSISWSRNGKKLLTASNDGSLVLWDLATSKILYSLELESPILFAEFHPRNNDLCLIVLQKGTDPILLNFKSSEKTPLNIKSLVTSYIKREENSTGVIPTSVNSNYNGVATFASFNRRGEKIFFGDSCGMISVLDFKSMTIDRQFKVASSNTTVKQIEFSRNHRFMLVSSSDKVLRLISLESTNLYQQMREYQDSVNRMHWKKCCFSSNNEYVVGGMNHKSIHSIFIWSVSGSLVKDLEGPKEGLVDVVWHPLRPIIVSISFTGVIYVWTAYFEENWSSFAPDFQELEENLDYVEDEDEFDAKDSDNENQEVNNNNNNNIGRNPYKKIKTQQELNDKNSEEEEFVDVDHNDRITEFSSDEEEDLFCFSAIDDRYVSNVKFDDPRHPLYEKYQKDKEDSSSTTSNSTISSSSSPSPSSSSTTTTTTTSQKKDETQKKEKSTKKERNSDSKKRK.

5 WD repeats span residues 25-66 (PKNI…IVRT), 69-108 (HHTG…ILYS), 222-261 (SSNT…LYQQ), 267-312 (DSVN…KDLE), and 313-352 (GPKE…NWSS). Disordered stretches follow at residues 371-398 (DEFD…RNPY) and 462-525 (EKYQ…KKRK). Positions 383–392 (QEVNNNNNNN) are enriched in low complexity. The span at 462-471 (EKYQKDKEDS) shows a compositional bias: basic and acidic residues. The span at 472-500 (SSTTSNSTISSSSSPSPSSSSTTTTTTTS) shows a compositional bias: low complexity. Basic and acidic residues predominate over residues 501-525 (QKKDETQKKEKSTKKERNSDSKKRK).

The protein localises to the nucleus. In terms of biological role, involved in mono-, di- and trimethylation at 'Lys-4' of histone H3. Histone H3 'Lys-4' methylation represents a specific tag for epigenetic transcriptional activation. This chain is Retinoblastoma-binding-like protein E, found in Dictyostelium discoideum (Social amoeba).